The following is a 360-amino-acid chain: MSYKENLNPSSYTSKFATPSSATAAQRVLRKEPYVSTFTTPSDNLLAQRAQLARITPSASSSVPGRVAVSMDASSQNTALAELPKRKFTIDDFDIGRPLGKGKFGNVYLARDKQNKFIMALKVLFKSQLEKEGVEHQLRREIEIQSHLRHPNILRMYNYFHDRKRIYLMLEFAPRGELYKELQKHGRFDEQRSATFMEELADALQYCHERKVIHRDIKPENLLMGYKGELKIADFGWSVHAPSLRRRTMCGTLDYLPPEMIEGKTHDEKVDLWCAGVLCFEFLVGMPPFDSPSHTETHRRIVNVDLKFPPFLSDGSKDLISKLLRYHPPQRLPLKGVMEHPWVKANSRRVLPPVFQSSSK.

A Protein kinase domain is found at 93–343 (FDIGRPLGKG…LKGVMEHPWV (251 aa)). ATP-binding positions include 99–107 (LGKGKFGNV) and lysine 122. Aspartate 216 functions as the Proton acceptor in the catalytic mechanism.

The protein belongs to the protein kinase superfamily. Ser/Thr protein kinase family. Aurora subfamily. As to quaternary structure, component of the chromosomal passenger complex (CPC).

The protein localises to the nucleus. The protein resides in the chromosome. Its subcellular location is the centromere. It localises to the cytoplasm. It is found in the cytoskeleton. The protein localises to the spindle. The protein resides in the midbody. The catalysed reaction is L-seryl-[protein] + ATP = O-phospho-L-seryl-[protein] + ADP + H(+). It carries out the reaction L-threonyl-[protein] + ATP = O-phospho-L-threonyl-[protein] + ADP + H(+). Its activity is regulated as follows. Kinase activity is stimulated by cell-cycle specific phosphorylation. Serine/threonine-protein kinase component of the chromosomal passenger complex (CPC), a complex that acts as a key regulator of mitosis. The CPC complex has essential functions at the centromere in ensuring correct chromosome alignment and segregation and is required for chromatin-induced microtubule stabilization and spindle assembly. Involved in the bipolar attachment of spindle microtubules to kinetochores and is a key regulator for the onset of cytokinesis during mitosis. Required for central/midzone spindle assembly and cleavage furrow formation. Key component of the cytokinesis checkpoint, a process required to delay abscission to prevent both premature resolution of intercellular chromosome bridges and accumulation of DNA damage. Phosphorylates 'Ser-10' of histone H3 during mitosis. The chain is Aurora kinase B from Xenopus tropicalis (Western clawed frog).